The following is a 514-amino-acid chain: Maturase K (514 aa).

Belongs to the intron maturase 2 family. MatK subfamily.

The protein resides in the plastid. It localises to the chloroplast. Functionally, usually encoded in the trnK tRNA gene intron. Probably assists in splicing its own and other chloroplast group II introns. The protein is Maturase K of Drosophyllum lusitanicum (Portuguese sundew).